The primary structure comprises 1588 residues: Ubiquitin carboxyl-terminal hydrolase 54 (1588 aa).

Arginine 12 carries the post-translational modification Omega-N-methylarginine. The 322-residue stretch at 31-352 folds into the USP domain; it reads KGLSNEPGQN…QPLLLLYADP (322 aa). Catalysis depends on cysteine 42, which acts as the Nucleophile. Zn(2+) is bound by residues histidine 67, cysteine 69, cysteine 74, cysteine 77, histidine 133, cysteine 145, cysteine 150, histidine 153, cysteine 166, cysteine 169, cysteine 225, and cysteine 229. Catalysis depends on histidine 302, which acts as the Proton acceptor. 2 stretches are compositionally biased toward basic and acidic residues: residues 382 to 391 and 424 to 434; these read GHLTDSECNQ and SEGETLKEKQA. Disordered stretches follow at residues 382–519, 555–577, and 601–624; these read GHLT…PTWR, FTPD…RSQH, and ESGY…PPDS. Serine 424 is modified (phosphoserine). The segment covering 453–471 has biased composition (polar residues); the sequence is TVSNMIHSRPSLASQTSAG. Over residues 499-513 the composition is skewed to low complexity; that stretch reads TESTSSEAKSSSSSK. A compositionally biased stretch (basic and acidic residues) spans 555–572; that stretch reads FTPDEVSKPTANDIKDGG. Low complexity predominate over residues 601 to 616; sequence ESGYESSERNSSSPVS. A phosphoserine mark is found at serine 613 and serine 616. Residues 682–712 adopt a coiled-coil conformation; it reads ELDELQEEVVRRAQEQELRKKREKELEAAKG. 4 disordered regions span residues 801–834, 1089–1182, 1221–1242, and 1491–1561; these read RSLQ…PQPT, QNTS…PDMY, SQVK…SHPR, and WGNL…RSPG. Over residues 808–826 the composition is skewed to low complexity; sequence QQQASSQQPVQPSASLPSQ. Over residues 1126–1147 the composition is skewed to basic and acidic residues; that stretch reads GREHCRWVKQPRSPDGRERPPC. The residue at position 1138 (serine 1138) is a Phosphoserine. Over residues 1510 to 1524 the composition is skewed to polar residues; sequence PSSNLHVPLRSTWNS. Over residues 1536–1547 the composition is skewed to basic and acidic residues; the sequence is RRIDMPPDDDWR.

Belongs to the peptidase C19 family.

It carries out the reaction Thiol-dependent hydrolysis of ester, thioester, amide, peptide and isopeptide bonds formed by the C-terminal Gly of ubiquitin (a 76-residue protein attached to proteins as an intracellular targeting signal).. Deubiquitinase that specifically mediates 'Lys-63'-linked deubiquitination of substrates with a polyubiquitin chain composed of at least 3 ubiquitins. Specifically recognizes ubiquitin chain in position S2 and catalyzes cleavage of polyubiquitin within 'Lys-63'-linked chains. Not able to deubiquitinate substrates with shorter ubiquitin chains. Mediates deubiquitination of PLK4, maintaining PLK4 stability by reducing its ubiquitination-mediated degradation. In Mus musculus (Mouse), this protein is Ubiquitin carboxyl-terminal hydrolase 54 (Usp54).